The following is a 444-amino-acid chain: Serine--tRNA ligase (444 aa).

Residue 248–250 (TSE) participates in L-serine binding. Residue 279–281 (RSE) coordinates ATP. Glu302 contacts L-serine. 366 to 369 (EISS) contributes to the ATP binding site. Ser401 lines the L-serine pocket.

This sequence belongs to the class-II aminoacyl-tRNA synthetase family. Type-1 seryl-tRNA synthetase subfamily. In terms of assembly, homodimer. The tRNA molecule binds across the dimer.

Its subcellular location is the cytoplasm. The enzyme catalyses tRNA(Ser) + L-serine + ATP = L-seryl-tRNA(Ser) + AMP + diphosphate + H(+). The catalysed reaction is tRNA(Sec) + L-serine + ATP = L-seryl-tRNA(Sec) + AMP + diphosphate + H(+). It participates in aminoacyl-tRNA biosynthesis; selenocysteinyl-tRNA(Sec) biosynthesis; L-seryl-tRNA(Sec) from L-serine and tRNA(Sec): step 1/1. Catalyzes the attachment of serine to tRNA(Ser). Is also able to aminoacylate tRNA(Sec) with serine, to form the misacylated tRNA L-seryl-tRNA(Sec), which will be further converted into selenocysteinyl-tRNA(Sec). The chain is Serine--tRNA ligase from Polaromonas naphthalenivorans (strain CJ2).